We begin with the raw amino-acid sequence, 360 residues long: Biotin synthase (360 aa).

The interval 1-21 is disordered; that stretch reads MTQLNIAPASTDTAAASNNNA. The 228-residue stretch at 62 to 289 folds into the Radical SAM core domain; sequence NTVQLSTLLS…RAMVRLSAGR (228 aa). Positions 77, 81, and 84 each coordinate [4Fe-4S] cluster. 4 residues coordinate [2Fe-2S] cluster: Cys-121, Cys-152, Cys-212, and Arg-284.

Belongs to the radical SAM superfamily. Biotin synthase family. In terms of assembly, homodimer. It depends on [4Fe-4S] cluster as a cofactor. [2Fe-2S] cluster serves as cofactor.

It catalyses the reaction (4R,5S)-dethiobiotin + (sulfur carrier)-SH + 2 reduced [2Fe-2S]-[ferredoxin] + 2 S-adenosyl-L-methionine = (sulfur carrier)-H + biotin + 2 5'-deoxyadenosine + 2 L-methionine + 2 oxidized [2Fe-2S]-[ferredoxin]. The protein operates within cofactor biosynthesis; biotin biosynthesis; biotin from 7,8-diaminononanoate: step 2/2. In terms of biological role, catalyzes the conversion of dethiobiotin (DTB) to biotin by the insertion of a sulfur atom into dethiobiotin via a radical-based mechanism. The polypeptide is Biotin synthase (Paraburkholderia xenovorans (strain LB400)).